Consider the following 266-residue polypeptide: Hydroxyethylthiazole kinase (266 aa).

Position 45 (M45) interacts with substrate. Residues R120 and T165 each coordinate ATP. A192 contributes to the substrate binding site.

This sequence belongs to the Thz kinase family. Requires Mg(2+) as cofactor.

It catalyses the reaction 5-(2-hydroxyethyl)-4-methylthiazole + ATP = 4-methyl-5-(2-phosphooxyethyl)-thiazole + ADP + H(+). It participates in cofactor biosynthesis; thiamine diphosphate biosynthesis; 4-methyl-5-(2-phosphoethyl)-thiazole from 5-(2-hydroxyethyl)-4-methylthiazole: step 1/1. Its function is as follows. Catalyzes the phosphorylation of the hydroxyl group of 4-methyl-5-beta-hydroxyethylthiazole (THZ). This Psychrobacter sp. (strain PRwf-1) protein is Hydroxyethylthiazole kinase.